The primary structure comprises 172 residues: Bone marrow stromal antigen 2 (172 aa).

Over 1-26 the chain is Cytoplasmic; that stretch reads MAPSFYHYLPVAMDERWEPKGWSIRR. Residue Lys-20 forms a Glycyl lysine isopeptide (Lys-Gly) (interchain with G-Cter in ubiquitin) linkage. A helical; Signal-anchor for type II membrane protein transmembrane segment spans residues 27-47; it reads WWLVAAILVVLIGVVLVCLIV. The Extracellular portion of the chain corresponds to 48 to 152; sequence YFANAAHSEA…EISTTVQVNS (105 aa). Asn-70 and Asn-97 each carry an N-linked (GlcNAc...) asparagine glycan. Positions 103–149 form a coiled coil; sequence LRDSLKKKVSQTQEQQARIKELENKIERLNQELENLRTQKEISTTVQ. Ser-152 is lipidated: GPI-anchor amidated serine. The propeptide at 153–172 is removed in mature form; that stretch reads GGSVVVSSLLVLVAVLFLHF.

In terms of assembly, parallel homodimer; disulfide-linked. May form homotetramers under reducing conditions. Isoform 1 and isoform 2 form homodimers and also heterodimers with each other. Dimerization is essential for its antiviral activity. Interacts (via cytoplasmic domain) with ARHGAP44. Interacts with MMP14 (via C-terminal cytoplasmic tail). Interacts with LILRA4/ILT7. Interacts with RNF115. N-glycosylated. Post-translationally, the GPI anchor is essential for its antiviral activity. In terms of tissue distribution, ubiquitously expressed, with highest levels in brain and liver. Present in liver (at protein level).

It is found in the golgi apparatus. Its subcellular location is the trans-Golgi network. The protein resides in the cell membrane. It localises to the late endosome. The protein localises to the membrane raft. It is found in the cytoplasm. Its subcellular location is the apical cell membrane. Its function is as follows. IFN-induced antiviral host restriction factor which efficiently blocks the release of diverse mammalian enveloped viruses by directly tethering nascent virions to the membranes of infected cells. Acts as a direct physical tether, holding virions to the cell membrane and linking virions to each other. The tethered virions can be internalized by endocytosis and subsequently degraded or they can remain on the cell surface. In either case, their spread as cell-free virions is restricted. Its target viruses belong to diverse families, including retroviridae: human immunodeficiency virus type 1 (HIV-1), mouse mammary tumor virus (MMTV) and murine leukemia virus (MLV), filoviridae: ebola virus (EBOV), arenaviridae: lassa virus (LASV), and rhabdoviridae: vesicular stomatitis virus (VSV). Can inhibit cell surface proteolytic activity of MMP14 causing decreased activation of MMP15 which results in inhibition of cell growth and migration. Can stimulate signaling by LILRA4/ILT7 and consequently provide negative feedback to the production of IFN by plasmacytoid dendritic cells in response to viral infection. Plays a role in the organization of the subapical actin cytoskeleton in polarized epithelial cells. The chain is Bone marrow stromal antigen 2 (Bst2) from Rattus norvegicus (Rat).